The following is a 264-amino-acid chain: Ribosomal RNA small subunit methyltransferase A (264 aa).

Residues His15, Leu17, Gly42, Glu63, Asp88, and Asn109 each coordinate S-adenosyl-L-methionine.

This sequence belongs to the class I-like SAM-binding methyltransferase superfamily. rRNA adenine N(6)-methyltransferase family. RsmA subfamily.

Its subcellular location is the cytoplasm. It catalyses the reaction adenosine(1518)/adenosine(1519) in 16S rRNA + 4 S-adenosyl-L-methionine = N(6)-dimethyladenosine(1518)/N(6)-dimethyladenosine(1519) in 16S rRNA + 4 S-adenosyl-L-homocysteine + 4 H(+). Functionally, specifically dimethylates two adjacent adenosines (A1518 and A1519) in the loop of a conserved hairpin near the 3'-end of 16S rRNA in the 30S particle. May play a critical role in biogenesis of 30S subunits. This chain is Ribosomal RNA small subunit methyltransferase A, found in Nitrosococcus oceani (strain ATCC 19707 / BCRC 17464 / JCM 30415 / NCIMB 11848 / C-107).